The chain runs to 248 residues: Triosephosphate isomerase (248 aa).

A substrate-binding site is contributed by 9-11 (NWK). Residue His94 is the Electrophile of the active site. Glu166 (proton acceptor) is an active-site residue. Substrate is bound by residues Gly172, Ser212, and 233-234 (GG).

Belongs to the triosephosphate isomerase family. As to quaternary structure, homodimer.

It is found in the cytoplasm. The catalysed reaction is D-glyceraldehyde 3-phosphate = dihydroxyacetone phosphate. It participates in carbohydrate biosynthesis; gluconeogenesis. The protein operates within carbohydrate degradation; glycolysis; D-glyceraldehyde 3-phosphate from glycerone phosphate: step 1/1. Involved in the gluconeogenesis. Catalyzes stereospecifically the conversion of dihydroxyacetone phosphate (DHAP) to D-glyceraldehyde-3-phosphate (G3P). This is Triosephosphate isomerase from Clostridium botulinum (strain ATCC 19397 / Type A).